A 707-amino-acid chain; its full sequence is Drebrin (707 aa).

The residue at position 2 (Ala2) is an N-acetylalanine. The 132-residue stretch at 3–134 (GVSFSGHRLE…DAGAIGQRLS (132 aa)) folds into the ADF-H domain. Residues Ser141 and Ser142 each carry the phosphoserine modification. The segment covering 209 to 236 (ERMEQERQEQEERERRYREREQQIEEHR) has biased composition (basic and acidic residues). Disordered stretches follow at residues 209-438 (ERME…VCKE), 452-497 (AEEP…TSVA), 531-557 (WPGNGEEASTPQAEPRVPTPPSGAEAS), 582-609 (LLNFDELPEPPATFCDPEEEAEGEPLAA), and 630-707 (LEPE…EGGD). Ser241 carries the phosphoserine modification. Residues 288–298 (DNPREFFRQQE) show a composition bias toward basic and acidic residues. The span at 329–343 (SDSGPSSSSSSSSSP) shows a compositional bias: low complexity. Ser342 carries the phosphoserine modification. Positions 355–364 (RTPNLSSSLP) are enriched in polar residues. A phosphothreonine mark is found at Thr377 and Thr381. Positions 380–395 (PTRSPSDSSTASTPIT) are enriched in polar residues. Phosphoserine is present on residues Ser383, Ser385, and Ser391. Thr392 carries the post-translational modification Phosphothreonine. A compositionally biased stretch (pro residues) spans 409–420 (QPPPPPPPPPPA). A compositionally biased stretch (basic and acidic residues) spans 428-438 (PRLDGEEVCKE). At Ser467 the chain carries Phosphoserine. At Thr549 the chain carries Phosphothreonine. Residues 639–652 (NGETTQKEGTQQAS) are compositionally biased toward polar residues. Ser659 is modified (phosphoserine). Acidic residues predominate over residues 695 to 707 (PVPEEEEGFEGGD).

Interacts with RUFY. Interacts with CXCR4; this interaction is enhanced by antigenic stimulation. Interacts (via ADF-H domain) with ZMYND8 (via N-terminus); the interaction leads to sequestering of ZMYND8 in the cytoplasm. ISGylated. In terms of tissue distribution, brain neurons.

The protein resides in the cytoplasm. Its subcellular location is the cell projection. The protein localises to the dendrite. It localises to the cell cortex. It is found in the cell junction. The protein resides in the growth cone. Actin cytoskeleton-organizing protein that plays a role in the formation of cell projections. Required for actin polymerization at immunological synapses (IS) and for the recruitment of the chemokine receptor CXCR4 to IS. Plays a role in dendritic spine morphogenesis and organization, including the localization of the dopamine receptor DRD1 to the dendritic spines. Involved in memory-related synaptic plasticity in the hippocampus. This is Drebrin (Dbn1) from Rattus norvegicus (Rat).